Reading from the N-terminus, the 426-residue chain is Histidine--tRNA ligase (426 aa).

Belongs to the class-II aminoacyl-tRNA synthetase family. In terms of assembly, homodimer.

The protein resides in the cytoplasm. It catalyses the reaction tRNA(His) + L-histidine + ATP = L-histidyl-tRNA(His) + AMP + diphosphate + H(+). This Lactiplantibacillus plantarum (strain ATCC BAA-793 / NCIMB 8826 / WCFS1) (Lactobacillus plantarum) protein is Histidine--tRNA ligase.